The following is a 364-amino-acid chain: Probable dual-specificity RNA methyltransferase RlmN (364 aa).

The Proton acceptor role is filled by glutamate 107. Residues 113-346 (HDYGNSVCVT…ATIRREQGSD (234 aa)) form the Radical SAM core domain. A disulfide bond links cysteine 120 and cysteine 351. Positions 127, 131, and 134 each coordinate [4Fe-4S] cluster. S-adenosyl-L-methionine contacts are provided by residues 177-178 (GE), serine 209, 232-234 (SLH), and asparagine 308. Cysteine 351 serves as the catalytic S-methylcysteine intermediate.

This sequence belongs to the radical SAM superfamily. RlmN family. It depends on [4Fe-4S] cluster as a cofactor.

The protein localises to the cytoplasm. The catalysed reaction is adenosine(2503) in 23S rRNA + 2 reduced [2Fe-2S]-[ferredoxin] + 2 S-adenosyl-L-methionine = 2-methyladenosine(2503) in 23S rRNA + 5'-deoxyadenosine + L-methionine + 2 oxidized [2Fe-2S]-[ferredoxin] + S-adenosyl-L-homocysteine. The enzyme catalyses adenosine(37) in tRNA + 2 reduced [2Fe-2S]-[ferredoxin] + 2 S-adenosyl-L-methionine = 2-methyladenosine(37) in tRNA + 5'-deoxyadenosine + L-methionine + 2 oxidized [2Fe-2S]-[ferredoxin] + S-adenosyl-L-homocysteine. Functionally, specifically methylates position 2 of adenine 2503 in 23S rRNA and position 2 of adenine 37 in tRNAs. Confers resistance to some classes of antibiotics. In Staphylococcus aureus (strain bovine RF122 / ET3-1), this protein is Probable dual-specificity RNA methyltransferase RlmN.